We begin with the raw amino-acid sequence, 391 residues long: 3-ketoacyl-CoA thiolase (391 aa).

Residue Cys95 is the Acyl-thioester intermediate of the active site. Active-site proton acceptor residues include His347 and Cys377.

The protein belongs to the thiolase-like superfamily. Thiolase family. In terms of assembly, heterotetramer of two alpha chains (FadB) and two beta chains (FadA).

Its subcellular location is the cytoplasm. The enzyme catalyses an acyl-CoA + acetyl-CoA = a 3-oxoacyl-CoA + CoA. The protein operates within lipid metabolism; fatty acid beta-oxidation. Catalyzes the final step of fatty acid oxidation in which acetyl-CoA is released and the CoA ester of a fatty acid two carbons shorter is formed. This is 3-ketoacyl-CoA thiolase from Stutzerimonas stutzeri (strain A1501) (Pseudomonas stutzeri).